The following is a 172-amino-acid chain: Large ribosomal subunit protein eL20A (172 aa).

A Phosphoserine modification is found at serine 32. Glycyl lysine isopeptide (Lys-Gly) (interchain with G-Cter in ubiquitin) cross-links involve residues lysine 125, lysine 131, and lysine 149.

The protein belongs to the eukaryotic ribosomal protein eL20 family. In terms of assembly, component of the large ribosomal subunit (LSU). Mature yeast ribosomes consist of a small (40S) and a large (60S) subunit. The 40S small subunit contains 1 molecule of ribosomal RNA (18S rRNA) and 33 different proteins (encoded by 57 genes). The large 60S subunit contains 3 rRNA molecules (25S, 5.8S and 5S rRNA) and 46 different proteins (encoded by 81 genes). eL20 forms multiple interactions with RNA and proteins in the central protuberance, connecting components of core functional centers that are located far apart.

It localises to the cytoplasm. Its function is as follows. Component of the ribosome, a large ribonucleoprotein complex responsible for the synthesis of proteins in the cell. The small ribosomal subunit (SSU) binds messenger RNAs (mRNAs) and translates the encoded message by selecting cognate aminoacyl-transfer RNA (tRNA) molecules. The large subunit (LSU) contains the ribosomal catalytic site termed the peptidyl transferase center (PTC), which catalyzes the formation of peptide bonds, thereby polymerizing the amino acids delivered by tRNAs into a polypeptide chain. The nascent polypeptides leave the ribosome through a tunnel in the LSU and interact with protein factors that function in enzymatic processing, targeting, and the membrane insertion of nascent chains at the exit of the ribosomal tunnel. In Saccharomyces cerevisiae (strain ATCC 204508 / S288c) (Baker's yeast), this protein is Large ribosomal subunit protein eL20A.